The following is a 246-amino-acid chain: DNA repair protein RecO (246 aa).

This sequence belongs to the RecO family.

In terms of biological role, involved in DNA repair and RecF pathway recombination. This chain is DNA repair protein RecO, found in Marinobacter nauticus (strain ATCC 700491 / DSM 11845 / VT8) (Marinobacter aquaeolei).